Here is a 76-residue protein sequence, read N- to C-terminus: Dermaseptin-B4 (76 aa).

The N-terminal stretch at 1–22 (MAFLKKSLFLVLFLGLVSLSIC) is a signal peptide. The propeptide occupies 23 to 43 (EEEKRENKDEIEQEDDEQSEE). A Glutamine amide modification is found at Gln-73. Residues 75 to 76 (EQ) constitute a propeptide that is removed on maturation.

Belongs to the frog skin active peptide (FSAP) family. Dermaseptin subfamily. In terms of tissue distribution, expressed by the skin glands.

The protein resides in the secreted. In terms of biological role, potent antimicrobial peptide with potent activity against Gram-positive and Gram-negative bacteria. Probably acts by disturbing membrane functions with its amphipathic structure. Has an activity of stimulation of insulin release, which may protect the species from being eaten by predators by causing fatal hypoglycemia. Has hemolytic activity. The protein is Dermaseptin-B4 of Phyllomedusa bicolor (Two-colored leaf frog).